Reading from the N-terminus, the 238-residue chain is Probable 2-phosphosulfolactate phosphatase (238 aa).

Belongs to the ComB family. Mg(2+) is required as a cofactor.

It catalyses the reaction (2R)-O-phospho-3-sulfolactate + H2O = (2R)-3-sulfolactate + phosphate. The sequence is that of Probable 2-phosphosulfolactate phosphatase from Clostridium beijerinckii (strain ATCC 51743 / NCIMB 8052) (Clostridium acetobutylicum).